The chain runs to 495 residues: UDP-glycosyltransferase 73C25 (495 aa).

23–26 (GHMI) serves as a coordination point for UDP-alpha-D-glucose. His24 (proton acceptor) is an active-site residue. Catalysis depends on Asp129, which acts as the Charge relay. UDP-alpha-D-glucose contacts are provided by residues 355-358 (WSPQ), 373-381 (HCGWNSTLE), and 397-398 (DQ).

This sequence belongs to the UDP-glycosyltransferase family.

Its function is as follows. Catalyzes the transfer of a glucose (Glc) moiety from UDP-Glc to the C-28 carboxylic group of oleanolate 3-O-beta-D-glucoside to form oleanolate 3,28-O-beta-D-diglucoside. The polypeptide is UDP-glycosyltransferase 73C25 (Barbarea vulgaris (Yellow rocket)).